The primary structure comprises 475 residues: ATP synthase subunit beta (475 aa).

155–162 (GGAGVGKT) contributes to the ATP binding site.

Belongs to the ATPase alpha/beta chains family. F-type ATPases have 2 components, CF(1) - the catalytic core - and CF(0) - the membrane proton channel. CF(1) has five subunits: alpha(3), beta(3), gamma(1), delta(1), epsilon(1). CF(0) has three main subunits: a(1), b(2) and c(9-12). The alpha and beta chains form an alternating ring which encloses part of the gamma chain. CF(1) is attached to CF(0) by a central stalk formed by the gamma and epsilon chains, while a peripheral stalk is formed by the delta and b chains.

It localises to the cell inner membrane. The catalysed reaction is ATP + H2O + 4 H(+)(in) = ADP + phosphate + 5 H(+)(out). Produces ATP from ADP in the presence of a proton gradient across the membrane. The catalytic sites are hosted primarily by the beta subunits. This Rhizobium etli (strain ATCC 51251 / DSM 11541 / JCM 21823 / NBRC 15573 / CFN 42) protein is ATP synthase subunit beta.